An 86-amino-acid polypeptide reads, in one-letter code: Selenoprotein W (86 aa).

The cysteinyl-selenocysteine (Cys-Sec); redox-active cross-link spans 10-13 (CGGU). Residue selenocysteine 13 is a non-standard amino acid, selenocysteine.

The protein belongs to the SelWTH family. Selenoprotein W subfamily.

It is found in the cytoplasm. Plays a role as a glutathione (GSH)-dependent antioxidant. May be involved in a redox-related process. May play a role in the myopathies of selenium deficiency. This Danio rerio (Zebrafish) protein is Selenoprotein W.